Here is a 254-residue protein sequence, read N- to C-terminus: tRNA (guanine-N(1)-)-methyltransferase (254 aa).

S-adenosyl-L-methionine-binding positions include Gly-119 and 139 to 144 (IGDFVL).

The protein belongs to the RNA methyltransferase TrmD family. As to quaternary structure, homodimer.

The protein localises to the cytoplasm. The catalysed reaction is guanosine(37) in tRNA + S-adenosyl-L-methionine = N(1)-methylguanosine(37) in tRNA + S-adenosyl-L-homocysteine + H(+). Specifically methylates guanosine-37 in various tRNAs. This is tRNA (guanine-N(1)-)-methyltransferase from Dechloromonas aromatica (strain RCB).